A 525-amino-acid chain; its full sequence is AarF domain-containing protein kinase 1 (525 aa).

One can recognise a Protein kinase domain in the interval 148–477 (SFDDTPLGAA…HKKRDAGSFF (330 aa)). ATP contacts are provided by residues 154–162 (LGAASLAQV) and K176. Catalysis depends on D308, which acts as the Proton acceptor.

The protein belongs to the protein kinase superfamily. ADCK protein kinase family.

The protein resides in the mitochondrion. Appears to be essential for maintaining mitochondrial cristae formation and mitochondrial function by acting via YME1L1 in a kinase-independent manner to regulate essential mitochondrial structural proteins OPA1 and IMMT. The action of this enzyme is not yet clear. It is not known if it has protein kinase activity and what type of substrate it would phosphorylate (Ser, Thr or Tyr). The polypeptide is AarF domain-containing protein kinase 1 (Adck1) (Mus musculus (Mouse)).